A 160-amino-acid polypeptide reads, in one-letter code: Class II hydrophobin 8 (160 aa).

4 disulfide bridges follow: Cys-92–Cys-141, Cys-102–Cys-132, Cys-103–Cys-115, and Cys-142–Cys-153.

It belongs to the cerato-ulmin hydrophobin family. In terms of assembly, homodimer. Homodimers further self-assemble to form highly ordered films at water-air interfaces through intermolecular interactions.

Its subcellular location is the secreted. It localises to the cell wall. Aerial growth, conidiation, and dispersal of filamentous fungi in the environment rely upon a capability of their secreting small amphipathic proteins called hydrophobins (HPBs) with low sequence identity. Class I can self-assemble into an outermost layer of rodlet bundles on aerial cell surfaces, conferring cellular hydrophobicity that supports fungal growth, development and dispersal; whereas Class II form highly ordered films at water-air interfaces through intermolecular interactions but contribute nothing to the rodlet structure. The polypeptide is Class II hydrophobin 8 (Trichoderma asperellum (strain ATCC 204424 / CBS 433.97 / NBRC 101777)).